The chain runs to 286 residues: 4-hydroxybenzoate octaprenyltransferase (286 aa).

Helical transmembrane passes span 20 to 40 (IGTL…AQGL), 43 to 63 (IKVL…GCII), 96 to 116 (LFTL…PLVV), 142 to 162 (FLGI…LGEV), 167 to 187 (WWLF…YAIV), 210 to 230 (QIIG…GLVA), 235 to 255 (IYGL…RLIF), and 266 to 286 (FLNN…DYMI).

Belongs to the UbiA prenyltransferase family. Mg(2+) serves as cofactor.

The protein resides in the cell inner membrane. It catalyses the reaction all-trans-octaprenyl diphosphate + 4-hydroxybenzoate = 4-hydroxy-3-(all-trans-octaprenyl)benzoate + diphosphate. Its pathway is cofactor biosynthesis; ubiquinone biosynthesis. Catalyzes the prenylation of para-hydroxybenzoate (PHB) with an all-trans polyprenyl group. Mediates the second step in the final reaction sequence of ubiquinone-8 (UQ-8) biosynthesis, which is the condensation of the polyisoprenoid side chain with PHB, generating the first membrane-bound Q intermediate 3-octaprenyl-4-hydroxybenzoate. The polypeptide is 4-hydroxybenzoate octaprenyltransferase (Shewanella frigidimarina (strain NCIMB 400)).